A 530-amino-acid polypeptide reads, in one-letter code: UDP-glucuronosyltransferase 2B15 (530 aa).

An N-terminal signal peptide occupies residues 1–23; it reads MSLKWTSVFLLIQLSCYFSSGSC. Asn-65 is a glycosylation site (N-linked (GlcNAc...) asparagine). Lys-136 carries the N6-succinyllysine modification. N-linked (GlcNAc...) asparagine glycans are attached at residues Asn-316 and Asn-483. A helical transmembrane segment spans residues 495–515; the sequence is IAFLLACVATVIFIITKFCLF.

Belongs to the UDP-glycosyltransferase family. In terms of tissue distribution, expressed in many tissues. Present in liver, prostate and testis.

It localises to the endoplasmic reticulum membrane. The enzyme catalyses glucuronate acceptor + UDP-alpha-D-glucuronate = acceptor beta-D-glucuronoside + UDP + H(+). The catalysed reaction is 17alpha-estradiol + UDP-alpha-D-glucuronate = 17alpha-estradiol 3-O-(beta-D-glucuronate) + UDP + H(+). It carries out the reaction 16alpha,17alpha-estriol + UDP-alpha-D-glucuronate = 16alpha,17alpha-estriol 3-O-(beta-D-glucuronate) + UDP + H(+). It catalyses the reaction 17beta-hydroxy-5alpha-androstan-3-one + UDP-alpha-D-glucuronate = 5alpha-dihydrotestosterone 17-O-(beta-D-glucuronate) + UDP + H(+). Functionally, UDP-glucuronosyltransferase (UGT) that catalyzes phase II biotransformation reactions in which lipophilic substrates are conjugated with glucuronic acid to increase the metabolite's water solubility, thereby facilitating excretion into either the urine or bile. Essential for the elimination and detoxification of drugs, xenobiotics and endogenous compounds. Catalyzes the glucuronidation of endogenous steroid hormones such as androgens (testosterone, androsterone) and estrogens (estradiol, epiestradiol, estriol, catechol estrogens). Displays glucuronidation activity toward several classes of xenobiotic substrates, including phenolic compounds (eugenol, 4-nitrophenol, 4-hydroxybiphenyl) and phenylpropanoids (naringenin, coumarins). Catalyzes the glucuronidation of monoterpenoid alcohols such as borneol, menthol and isomenthol, a class of natural compounds used in essential oils. The polypeptide is UDP-glucuronosyltransferase 2B15 (Homo sapiens (Human)).